The chain runs to 344 residues: DNA-directed RNA polymerase subunit alpha (344 aa).

The interval 1–238 (MKVIKTAPLI…KQLGVFGERP (238 aa)) is alpha N-terminal domain (alpha-NTD). Residues 254 to 344 (AKDLSAKIES…EKLEDKGGND (91 aa)) form an alpha C-terminal domain (alpha-CTD) region.

Belongs to the RNA polymerase alpha chain family. In terms of assembly, homodimer. The RNAP catalytic core consists of 2 alpha, 1 beta, 1 beta' and 1 omega subunit. When a sigma factor is associated with the core the holoenzyme is formed, which can initiate transcription.

The catalysed reaction is RNA(n) + a ribonucleoside 5'-triphosphate = RNA(n+1) + diphosphate. Functionally, DNA-dependent RNA polymerase catalyzes the transcription of DNA into RNA using the four ribonucleoside triphosphates as substrates. The sequence is that of DNA-directed RNA polymerase subunit alpha from Helicobacter pylori (strain J99 / ATCC 700824) (Campylobacter pylori J99).